A 402-amino-acid chain; its full sequence is Putative cytochrome P450 133B1 (402 aa).

A heme-binding site is contributed by cysteine 348.

It belongs to the cytochrome P450 family. Heme is required as a cofactor.

This Xylella fastidiosa (strain 9a5c) protein is Putative cytochrome P450 133B1 (cyp133B1).